The chain runs to 227 residues: Zinc finger protein 511 (227 aa).

3 C2H2-type zinc fingers span residues 80–105 (FTCQ…HMMH), 107–130 (NTCS…LEWH), and 144–169 (YQCL…VRLH). The interval 180-204 (PKTNRGPAMPAAADAATRAPTDDSD) is disordered. Over residues 186 to 198 (PAMPAAADAATRA) the composition is skewed to low complexity.

The protein belongs to the krueppel C2H2-type zinc-finger protein family.

The protein localises to the nucleus. In terms of biological role, may be involved in transcriptional regulation. In Mus musculus (Mouse), this protein is Zinc finger protein 511 (Znf511).